The primary structure comprises 251 residues: Octanoyltransferase (251 aa).

The BPL/LPL catalytic domain occupies 29-251 (AATPNSLWIC…GQKLSSYLAP (223 aa)). 68–75 (RGGQVTYH) is a binding site for substrate. The disordered stretch occupies residues 137 to 174 (ARLRPSPQPSPKGRGSSTPVLLPPLPGEGGGGGGPDPD). Substrate contacts are provided by residues 184-186 (ALG) and 197-199 (GVA). Cysteine 215 (acyl-thioester intermediate) is an active-site residue.

The protein belongs to the LipB family.

Its subcellular location is the cytoplasm. It catalyses the reaction octanoyl-[ACP] + L-lysyl-[protein] = N(6)-octanoyl-L-lysyl-[protein] + holo-[ACP] + H(+). The protein operates within protein modification; protein lipoylation via endogenous pathway; protein N(6)-(lipoyl)lysine from octanoyl-[acyl-carrier-protein]: step 1/2. Functionally, catalyzes the transfer of endogenously produced octanoic acid from octanoyl-acyl-carrier-protein onto the lipoyl domains of lipoate-dependent enzymes. Lipoyl-ACP can also act as a substrate although octanoyl-ACP is likely to be the physiological substrate. The chain is Octanoyltransferase from Polaromonas sp. (strain JS666 / ATCC BAA-500).